Reading from the N-terminus, the 434-residue chain is D-amino acid dehydrogenase (434 aa).

3–17 (VLVLGSGVIGTASAY) lines the FAD pocket.

The protein belongs to the DadA oxidoreductase family. FAD serves as cofactor.

The enzyme catalyses a D-alpha-amino acid + A + H2O = a 2-oxocarboxylate + AH2 + NH4(+). The protein operates within amino-acid degradation; D-alanine degradation; NH(3) and pyruvate from D-alanine: step 1/1. Functionally, oxidative deamination of D-amino acids. The chain is D-amino acid dehydrogenase from Pseudomonas entomophila (strain L48).